Here is a 326-residue protein sequence, read N- to C-terminus: 5-dehydro-2-deoxygluconokinase (326 aa).

The protein belongs to the carbohydrate kinase PfkB family.

It carries out the reaction 5-dehydro-2-deoxy-D-gluconate + ATP = 6-phospho-5-dehydro-2-deoxy-D-gluconate + ADP + H(+). The protein operates within polyol metabolism; myo-inositol degradation into acetyl-CoA; acetyl-CoA from myo-inositol: step 5/7. Its function is as follows. Catalyzes the phosphorylation of 5-dehydro-2-deoxy-D-gluconate (2-deoxy-5-keto-D-gluconate or DKG) to 6-phospho-5-dehydro-2-deoxy-D-gluconate (DKGP). In Lacticaseibacillus casei (Lactobacillus casei), this protein is 5-dehydro-2-deoxygluconokinase.